The primary structure comprises 40 residues: Large ribosomal subunit protein bL36B (40 aa).

The protein belongs to the bacterial ribosomal protein bL36 family.

This is Large ribosomal subunit protein bL36B from Arthrobacter sp. (strain FB24).